Here is a 213-residue protein sequence, read N- to C-terminus: Urease accessory protein UreG (213 aa).

14 to 21 (GPVGSGKT) serves as a coordination point for GTP.

Belongs to the SIMIBI class G3E GTPase family. UreG subfamily. In terms of assembly, homodimer. UreD, UreF and UreG form a complex that acts as a GTP-hydrolysis-dependent molecular chaperone, activating the urease apoprotein by helping to assemble the nickel containing metallocenter of UreC. The UreE protein probably delivers the nickel.

The protein resides in the cytoplasm. Functionally, facilitates the functional incorporation of the urease nickel metallocenter. This process requires GTP hydrolysis, probably effectuated by UreG. This Mesorhizobium japonicum (strain LMG 29417 / CECT 9101 / MAFF 303099) (Mesorhizobium loti (strain MAFF 303099)) protein is Urease accessory protein UreG.